Consider the following 542-residue polypeptide: MSRQSTVTFHSGSRRGFSTASATTPTAGRSRFSSVSVARSSGNSGGLGRISGIGSGFGSRSLYNLGATRPVSVGGCAGSGFRSGFGGRASSSFGYGGGFGGPGFPVCPSGSIQEVTVNQSLLTPLNLQIDPTIQRVRKEEREQIKTLNNKFASFIDKVRFLEQQNKVLETKWNLLQEQGSRTVRQNLEPFFDAYVNDLRRQLDSVTAERGRLDAELRHMQEVVEDFKVRYEDEINKRAAAENEFVGLKKDVDGAYMNKVELEAKVDSLTDQINFYRMVYEAELSQMQNQVSDTSVVLSMDNNRSLDLDSIIAEVKAQYEDIANRSRAEAESWYQTKYEELQVTAGRHGDDLRNTKQEISEMNRMIQRLRSEIDAVKKQCSSLQTAISDTEQRGELALKDARAKLVELEDALQKAKQDMARLLREYQELMNVKLALDVEIATYRKLLEGEECRLSGEGVSPVNISVVTSTVSSGYGGGTNIGGGSLGLGGNSGYSFTTTGGHSLGTGLGGSGFTTSSSRGPVGSGSSIKFVSSTSSSRKSYKH.

The span at 1–26 (MSRQSTVTFHSGSRRGFSTASATTPT) shows a compositional bias: polar residues. Residues 1-44 (MSRQSTVTFHSGSRRGFSTASATTPTAGRSRFSSVSVARSSGNS) are disordered. The interval 1–139 (MSRQSTVTFH…DPTIQRVRKE (139 aa)) is head. Over residues 27 to 42 (AGRSRFSSVSVARSSG) the composition is skewed to low complexity. The tract at residues 140 to 175 (EREQIKTLNNKFASFIDKVRFLEQQNKVLETKWNLL) is coil 1A. An IF rod domain is found at 140–453 (EREQIKTLNN…KLLEGEECRL (314 aa)). Positions 176 to 194 (QEQGSRTVRQNLEPFFDAY) are linker 1. A coil 1B region spans residues 195–287 (VNDLRRQLDS…VYEAELSQMQ (93 aa)). Positions 288-310 (NQVSDTSVVLSMDNNRSLDLDSI) are linker 12. The segment at 311 to 449 (IAEVKAQYED…ATYRKLLEGE (139 aa)) is coil 2. The tract at residues 450–542 (ECRLSGEGVS…TSSSRKSYKH (93 aa)) is tail. The segment at 514–542 (TSSSRGPVGSGSSIKFVSSTSSSRKSYKH) is disordered.

This sequence belongs to the intermediate filament family. As to quaternary structure, heterodimer of a type I and a type II keratin. May associate with KRT17.

Its function is as follows. Plays a central role in hair and nail formation. Essential component of keratin intermediate filaments in the companion layer of the hair follicle. The polypeptide is Keratin, type II cytoskeletal 75 (Krt75) (Rattus norvegicus (Rat)).